The following is a 181-amino-acid chain: Isopentenyl-diphosphate Delta-isomerase (181 aa).

Positions 25 and 32 each coordinate Mn(2+). Residues 30–164 (PLHLAFSCWL…PWAFSPWMVM (135 aa)) enclose the Nudix hydrolase domain. Cys-67 is a catalytic residue. A Mn(2+)-binding site is contributed by His-69. Glu-87 lines the Mg(2+) pocket. Mn(2+) contacts are provided by Glu-114 and Glu-116. Glu-116 is an active-site residue.

It belongs to the IPP isomerase type 1 family. In terms of assembly, homodimer. The cofactor is Mg(2+). Mn(2+) serves as cofactor.

Its subcellular location is the cytoplasm. The enzyme catalyses isopentenyl diphosphate = dimethylallyl diphosphate. It participates in isoprenoid biosynthesis; dimethylallyl diphosphate biosynthesis; dimethylallyl diphosphate from isopentenyl diphosphate: step 1/1. Functionally, catalyzes the 1,3-allylic rearrangement of the homoallylic substrate isopentenyl (IPP) to its highly electrophilic allylic isomer, dimethylallyl diphosphate (DMAPP). This Salmonella paratyphi B (strain ATCC BAA-1250 / SPB7) protein is Isopentenyl-diphosphate Delta-isomerase.